Consider the following 426-residue polypeptide: tRNA(Met) cytidine acetate ligase (426 aa).

Residues 7–20, Gly-101, Asn-168, and Arg-193 contribute to the ATP site; that span reads VVEY…HLFH.

This sequence belongs to the TmcAL family.

It localises to the cytoplasm. The catalysed reaction is cytidine(34) in elongator tRNA(Met) + acetate + ATP = N(4)-acetylcytidine(34) in elongator tRNA(Met) + AMP + diphosphate. Functionally, catalyzes the formation of N(4)-acetylcytidine (ac(4)C) at the wobble position of elongator tRNA(Met), using acetate and ATP as substrates. First activates an acetate ion to form acetyladenylate (Ac-AMP) and then transfers the acetyl group to tRNA to form ac(4)C34. This Kosmotoga olearia (strain ATCC BAA-1733 / DSM 21960 / TBF 19.5.1) protein is tRNA(Met) cytidine acetate ligase.